Here is a 453-residue protein sequence, read N- to C-terminus: Chromosomal replication initiator protein DnaA (453 aa).

The domain I, interacts with DnaA modulators stretch occupies residues 1 to 73 (MSKEEIWDKV…ADLIEKAIGT (73 aa)). The domain II stretch occupies residues 73 to 114 (TKLMPNFVIQEDLTEDKQVKDSAKAKSEAKPDVQAPQNSSED). A compositionally biased stretch (basic and acidic residues) spans 91–103 (VKDSAKAKSEAKP). The segment at 91–113 (VKDSAKAKSEAKPDVQAPQNSSE) is disordered. The interval 115-331 (QFNVHNTFET…GALTRVIAYS (217 aa)) is domain III, AAA+ region. Residues G159, G161, K162, and T163 each contribute to the ATP site. The interval 332 to 453 (RLQNEAITTE…ENLEKEIRNQ (122 aa)) is domain IV, binds dsDNA.

The protein belongs to the DnaA family. Oligomerizes as a right-handed, spiral filament on DNA at oriC.

It is found in the cytoplasm. Plays an essential role in the initiation and regulation of chromosomal replication. ATP-DnaA binds to the origin of replication (oriC) to initiate formation of the DNA replication initiation complex once per cell cycle. Binds the DnaA box (a 9 base pair repeat at the origin) and separates the double-stranded (ds)DNA. Forms a right-handed helical filament on oriC DNA; dsDNA binds to the exterior of the filament while single-stranded (ss)DNA is stabiized in the filament's interior. The ATP-DnaA-oriC complex binds and stabilizes one strand of the AT-rich DNA unwinding element (DUE), permitting loading of DNA polymerase. After initiation quickly degrades to an ADP-DnaA complex that is not apt for DNA replication. Binds acidic phospholipids. The protein is Chromosomal replication initiator protein DnaA of Staphylococcus carnosus (strain TM300).